The following is a 481-amino-acid chain: Long chain base biosynthesis protein 1b (481 aa).

The helical transmembrane segment at 32 to 52 (FGIHIDGHLVVEGLLIAAILF) threads the bilayer.

It belongs to the class-II pyridoxal-phosphate-dependent aminotransferase family. In terms of assembly, heterodimer with LCB2. Component of the serine palmitoyltransferase (SPT) complex, composed of LCB1 and LCB2. Pyridoxal 5'-phosphate serves as cofactor.

It is found in the endoplasmic reticulum membrane. It catalyses the reaction L-serine + hexadecanoyl-CoA + H(+) = 3-oxosphinganine + CO2 + CoA. It functions in the pathway lipid metabolism; sphingolipid metabolism. Serine palmitoyltransferase (SPT). The heterodimer formed with LCB2 constitutes the catalytic core. This is Long chain base biosynthesis protein 1b from Oryza sativa subsp. japonica (Rice).